The sequence spans 197 residues: Small ribosomal subunit protein uS4 (197 aa).

Positions 94–158 constitute an S4 RNA-binding domain; sequence RRLDNVIYRF…LKKYLYDYKN (65 aa).

This sequence belongs to the universal ribosomal protein uS4 family. Part of the 30S ribosomal subunit. Contacts protein S5. The interaction surface between S4 and S5 is involved in control of translational fidelity.

Its function is as follows. One of the primary rRNA binding proteins, it binds directly to 16S rRNA where it nucleates assembly of the body of the 30S subunit. Functionally, with S5 and S12 plays an important role in translational accuracy. This is Small ribosomal subunit protein uS4 (rpsD) from Carsonella ruddii (strain PV).